Here is a 321-residue protein sequence, read N- to C-terminus: Lipoyl synthase (321 aa).

Residues Cys-68, Cys-73, Cys-79, Cys-94, Cys-98, Cys-101, and Ser-308 each contribute to the [4Fe-4S] cluster site. The Radical SAM core domain maps to 80–297 (FNHGTATFMI…KELAESIGFT (218 aa)).

The protein belongs to the radical SAM superfamily. Lipoyl synthase family. It depends on [4Fe-4S] cluster as a cofactor.

The protein resides in the cytoplasm. The enzyme catalyses [[Fe-S] cluster scaffold protein carrying a second [4Fe-4S](2+) cluster] + N(6)-octanoyl-L-lysyl-[protein] + 2 oxidized [2Fe-2S]-[ferredoxin] + 2 S-adenosyl-L-methionine + 4 H(+) = [[Fe-S] cluster scaffold protein] + N(6)-[(R)-dihydrolipoyl]-L-lysyl-[protein] + 4 Fe(3+) + 2 hydrogen sulfide + 2 5'-deoxyadenosine + 2 L-methionine + 2 reduced [2Fe-2S]-[ferredoxin]. It participates in protein modification; protein lipoylation via endogenous pathway; protein N(6)-(lipoyl)lysine from octanoyl-[acyl-carrier-protein]: step 2/2. In terms of biological role, catalyzes the radical-mediated insertion of two sulfur atoms into the C-6 and C-8 positions of the octanoyl moiety bound to the lipoyl domains of lipoate-dependent enzymes, thereby converting the octanoylated domains into lipoylated derivatives. This chain is Lipoyl synthase, found in Shewanella pealeana (strain ATCC 700345 / ANG-SQ1).